Consider the following 695-residue polypeptide: Elongation factor G (695 aa).

The 275-residue stretch at 8 to 282 folds into the tr-type G domain; it reads KDTRNIGIMA…AIVDYMPAPI (275 aa). Residues 17–24, 81–85, and 135–138 each bind GTP; these read AHIDAGKT, DTPGH, and NKMD. The tract at residues 285 to 304 is disordered; it reads PDIKGVDPQTDEPTTRKSSD.

It belongs to the TRAFAC class translation factor GTPase superfamily. Classic translation factor GTPase family. EF-G/EF-2 subfamily.

The protein resides in the cytoplasm. Functionally, catalyzes the GTP-dependent ribosomal translocation step during translation elongation. During this step, the ribosome changes from the pre-translocational (PRE) to the post-translocational (POST) state as the newly formed A-site-bound peptidyl-tRNA and P-site-bound deacylated tRNA move to the P and E sites, respectively. Catalyzes the coordinated movement of the two tRNA molecules, the mRNA and conformational changes in the ribosome. In Finegoldia magna (strain ATCC 29328 / DSM 20472 / WAL 2508) (Peptostreptococcus magnus), this protein is Elongation factor G.